The primary structure comprises 283 residues: Phosphatidylserine decarboxylase proenzyme (283 aa).

Catalysis depends on charge relay system; for autoendoproteolytic cleavage activity residues aspartate 90, histidine 143, and serine 248. The active-site Schiff-base intermediate with substrate; via pyruvic acid; for decarboxylase activity is the serine 248. Serine 248 is subject to Pyruvic acid (Ser); by autocatalysis.

It belongs to the phosphatidylserine decarboxylase family. PSD-B subfamily. Prokaryotic type I sub-subfamily. As to quaternary structure, heterodimer of a large membrane-associated beta subunit and a small pyruvoyl-containing alpha subunit. Pyruvate serves as cofactor. Is synthesized initially as an inactive proenzyme. Formation of the active enzyme involves a self-maturation process in which the active site pyruvoyl group is generated from an internal serine residue via an autocatalytic post-translational modification. Two non-identical subunits are generated from the proenzyme in this reaction, and the pyruvate is formed at the N-terminus of the alpha chain, which is derived from the carboxyl end of the proenzyme. The autoendoproteolytic cleavage occurs by a canonical serine protease mechanism, in which the side chain hydroxyl group of the serine supplies its oxygen atom to form the C-terminus of the beta chain, while the remainder of the serine residue undergoes an oxidative deamination to produce ammonia and the pyruvoyl prosthetic group on the alpha chain. During this reaction, the Ser that is part of the protease active site of the proenzyme becomes the pyruvoyl prosthetic group, which constitutes an essential element of the active site of the mature decarboxylase.

The protein resides in the cell membrane. It catalyses the reaction a 1,2-diacyl-sn-glycero-3-phospho-L-serine + H(+) = a 1,2-diacyl-sn-glycero-3-phosphoethanolamine + CO2. Its pathway is phospholipid metabolism; phosphatidylethanolamine biosynthesis; phosphatidylethanolamine from CDP-diacylglycerol: step 2/2. Its function is as follows. Catalyzes the formation of phosphatidylethanolamine (PtdEtn) from phosphatidylserine (PtdSer). The protein is Phosphatidylserine decarboxylase proenzyme of Francisella tularensis subsp. mediasiatica (strain FSC147).